The sequence spans 305 residues: Protein ORANGE, chloroplastic (305 aa).

A chloroplast-targeting transit peptide spans 1 to 54 (MSCLGRILSVSYPPDPYGSRLSVSKLSSPGRNRRLRWRFTALDSDSSSLDSDSS). Transmembrane regions (helical) follow at residues 144-164 (VYYA…GLLA) and 197-217 (IVAS…VVEV). Residues 206–297 (VGVISALMVV…CTGMAMASEH (92 aa)) form a CR-type-like region. The stretch at 228–235 (CKYCLGTG) is one CXXCXGXG motif repeat. The CXXCXXXG motif repeat unit spans residues 239-246 (CARCSSTG). Residues 272 to 279 (CSNCSGAG) form a CXXCXGXG motif repeat. The CXXCXXXG motif repeat unit spans residues 283 to 290 (CPTCLCTG).

Belongs to the orange-like family. As to quaternary structure, interacts with ERF1-2. As to expression, expressed in young leaves, curds and flower buds.

The protein resides in the plastid. It localises to the chloroplast membrane. Its subcellular location is the nucleus. Involved in chromoplast differentiation. Is associated with a cellular process that triggers the differentiation of pro-plastids or other non-colored plastids into chromoplasts for carotenoid accumulation. Associated with carotenoid accumulation in de-etiolated cotyledons. Controls leaf petiole elongation by suppressing the expression of ERF1 genes. This is Protein ORANGE, chloroplastic from Brassica oleracea var. botrytis (Cauliflower).